The sequence spans 85 residues: Large ribosomal subunit protein bL27 (85 aa).

The tract at residues 1-20 is disordered; it reads MATKKAGGSTRNGRDSEAKR.

This sequence belongs to the bacterial ribosomal protein bL27 family.

This chain is Large ribosomal subunit protein bL27, found in Histophilus somni (strain 129Pt) (Haemophilus somnus).